The chain runs to 181 residues: Oligoribonuclease (181 aa).

The Exonuclease domain occupies 8–171; it reads LIWIDLEMTG…QDIQESIAEL (164 aa). The active site involves tyrosine 129.

This sequence belongs to the oligoribonuclease family.

The protein resides in the cytoplasm. Its function is as follows. 3'-to-5' exoribonuclease specific for small oligoribonucleotides. The protein is Oligoribonuclease of Shewanella oneidensis (strain ATCC 700550 / JCM 31522 / CIP 106686 / LMG 19005 / NCIMB 14063 / MR-1).